The chain runs to 333 residues: Cytochrome f (333 aa).

The N-terminal stretch at 1 to 16 is a signal peptide; sequence MRNVFRTARLTRSARA. The helical transmembrane segment at 17–36 threads the bilayer; the sequence is IVKTLLIAIATVTFYFTSDL. Heme is bound by residues Tyr-45, Cys-66, Cys-69, and His-70. A helical transmembrane segment spans residues 299-319; it reads VKWMIAFVALVMLAQVMLVLK.

Belongs to the cytochrome f family. As to quaternary structure, the 4 large subunits of the cytochrome b6-f complex are cytochrome b6, subunit IV (17 kDa polypeptide, PetD), cytochrome f and the Rieske protein, while the 4 small subunits are PetG, PetL, PetM and PetN. The complex functions as a dimer. It depends on heme as a cofactor.

It is found in the cellular thylakoid membrane. Component of the cytochrome b6-f complex, which mediates electron transfer between photosystem II (PSII) and photosystem I (PSI), cyclic electron flow around PSI, and state transitions. The protein is Cytochrome f of Nostoc punctiforme (strain ATCC 29133 / PCC 73102).